The chain runs to 349 residues: uncharacterized protein (349 aa).

The span at 116 to 135 shows a compositional bias: polar residues; the sequence is HFSQTNPKSTPEPPCTSSSG. Positions 116–148 are disordered; the sequence is HFSQTNPKSTPEPPCTSSSGAGDCHENLPADGY.

This is an uncharacterized protein from Caenorhabditis elegans.